Reading from the N-terminus, the 422-residue chain is RNA exonuclease 4 (422 aa).

Positions 1–194 (MGKAKVPASK…APAPPTEEDI (194 aa)) are disordered. Residue S15 is modified to Phosphoserine. Residues 26–40 (LTRKKNKKKKRFWKS) show a composition bias toward basic residues. 2 positions are modified to phosphoserine: S96 and S111. 2 stretches are compositionally biased toward basic and acidic residues: residues 106-127 (NKKETSPQVKGEEMPAGKDQEA) and 151-176 (GTEHNKKGTKERTNGDIVPERGDIEH). K115 is covalently cross-linked (Glycyl lysine isopeptide (Lys-Gly) (interchain with G-Cter in SUMO2)). The Exonuclease domain maps to 243-394 (ALALDCEMVG…QDAQAAMRLY (152 aa)).

It belongs to the REXO4 family. As to quaternary structure, can bind ESR1 and ESR2. This interaction is abrogated by estrogen and augmented by tamoxifen treatment.

The protein localises to the nucleus. Its subcellular location is the nucleolus. The polypeptide is RNA exonuclease 4 (REXO4) (Homo sapiens (Human)).